A 240-amino-acid polypeptide reads, in one-letter code: Uridylate kinase (240 aa).

Residue 14–17 (KLSG) coordinates ATP. Gly56 is a binding site for UMP. The ATP site is built by Gly57 and Arg61. UMP-binding positions include Asp76 and 137 to 144 (TGNPFFTT). Residues Thr164, Tyr170, and Asp173 each coordinate ATP.

It belongs to the UMP kinase family. As to quaternary structure, homohexamer.

The protein localises to the cytoplasm. The catalysed reaction is UMP + ATP = UDP + ADP. Its pathway is pyrimidine metabolism; CTP biosynthesis via de novo pathway; UDP from UMP (UMPK route): step 1/1. Inhibited by UTP. Its function is as follows. Catalyzes the reversible phosphorylation of UMP to UDP. This chain is Uridylate kinase, found in Acidovorax sp. (strain JS42).